The chain runs to 129 residues: Fluoride-specific ion channel FluC 1 (129 aa).

4 consecutive transmembrane segments (helical) span residues 9–29 (LSVG…NLIW), 33–53 (GTLT…YFFV), 62–82 (LVTG…SFNL), and 98–118 (IYFF…MLVG). Residues G72 and T75 each contribute to the Na(+) site.

Belongs to the fluoride channel Fluc/FEX (TC 1.A.43) family.

It localises to the cell membrane. It carries out the reaction fluoride(in) = fluoride(out). With respect to regulation, na(+) is not transported, but it plays an essential structural role and its presence is essential for fluoride channel function. In terms of biological role, fluoride-specific ion channel. Important for reducing fluoride concentration in the cell, thus reducing its toxicity. In Lactobacillus johnsonii (strain CNCM I-12250 / La1 / NCC 533), this protein is Fluoride-specific ion channel FluC 1.